A 549-amino-acid chain; its full sequence is Hydroxylamine reductase (549 aa).

Positions 3, 6, 15, and 21 each coordinate [4Fe-4S] cluster. Residues His248, Glu272, Cys316, Cys403, Cys431, Cys456, Glu490, and Lys492 each coordinate hybrid [4Fe-2O-2S] cluster. Cys403 carries the post-translational modification Cysteine persulfide.

It belongs to the HCP family. [4Fe-4S] cluster serves as cofactor. The cofactor is hybrid [4Fe-2O-2S] cluster.

Its subcellular location is the cytoplasm. The catalysed reaction is A + NH4(+) + H2O = hydroxylamine + AH2 + H(+). Catalyzes the reduction of hydroxylamine to form NH(3) and H(2)O. This is Hydroxylamine reductase from Rhodospirillum rubrum (strain ATCC 11170 / ATH 1.1.1 / DSM 467 / LMG 4362 / NCIMB 8255 / S1).